A 218-amino-acid chain; its full sequence is Ribose-5-phosphate isomerase A (218 aa).

Residues 28 to 31 (TGST), 81 to 84 (DGAD), and 94 to 97 (KGGG) each bind substrate. The Proton acceptor role is filled by E103. K121 serves as a coordination point for substrate.

The protein belongs to the ribose 5-phosphate isomerase family. Homodimer.

It carries out the reaction aldehydo-D-ribose 5-phosphate = D-ribulose 5-phosphate. Its pathway is carbohydrate degradation; pentose phosphate pathway; D-ribose 5-phosphate from D-ribulose 5-phosphate (non-oxidative stage): step 1/1. Catalyzes the reversible conversion of ribose-5-phosphate to ribulose 5-phosphate. This chain is Ribose-5-phosphate isomerase A, found in Vibrio parahaemolyticus serotype O3:K6 (strain RIMD 2210633).